Reading from the N-terminus, the 404-residue chain is MAKEKIVLAYSGGLDTSVAIQWLVESGYEVIACCLDVGEGKNLDFIKEKAITVGASESYTIDAKEEFAEDFALIALQAHAYYEGKYPLISALSRPLIAKKLVEVARQEGASAIAHGCTGKGNDQVRFEVAIHALAPDLKVVSPVRDWKWSREEEINYAKEHNIPVPIDLDNPFSIDQNLWGRSNECGVLENPWTTPPEAAYDLTVSLEDAPDTPDIVEITFDAGIPISLNGENMSLANLILTLNEIAGKHGVGRIDHIENRLVGIKSREVYECPAAVTLITAHKELEDLTFVREVAHFKPIIEQKISETIYNGLWFSPLTEALVAFLKSTQKFVNGTIRVKLFKGHAIVEGRKSPNSLYDENLATYTSSDTFDQDAAVGFIKLWGLPTKVSAEVNSKVTITTEV.

9-17 (AYSGGLDTS) provides a ligand contact to ATP. Tyr-86 contacts L-citrulline. Gly-116 lines the ATP pocket. Positions 118, 122, and 123 each coordinate L-aspartate. An L-citrulline-binding site is contributed by Asn-122. L-citrulline-binding residues include Arg-126, Ser-174, Ser-183, Glu-259, and Tyr-271.

Belongs to the argininosuccinate synthase family. Type 1 subfamily. As to quaternary structure, homotetramer.

It localises to the cytoplasm. The catalysed reaction is L-citrulline + L-aspartate + ATP = 2-(N(omega)-L-arginino)succinate + AMP + diphosphate + H(+). The protein operates within amino-acid biosynthesis; L-arginine biosynthesis; L-arginine from L-ornithine and carbamoyl phosphate: step 2/3. This chain is Argininosuccinate synthase, found in Listeria monocytogenes serotype 4b (strain CLIP80459).